The sequence spans 257 residues: High-affinity copper transporter ctrC (257 aa).

The next 2 membrane-spanning stretches (helical) occupy residues 79-99 (RGMF…LEFL) and 202-222 (YFNG…SFIF).

This sequence belongs to the copper transporter (Ctr) (TC 1.A.56) family. SLC31A subfamily.

It localises to the cell membrane. The enzyme catalyses Cu(2+)(in) = Cu(2+)(out). In terms of biological role, high-affinity copper transporter of plasma membrane that mediates copper uptake under low copper conditions. The mechanism driving the transmembrane transport of copper has still to be determined. Acts as a potential virulence factor. The chain is High-affinity copper transporter ctrC from Aspergillus fumigatus (strain ATCC MYA-4609 / CBS 101355 / FGSC A1100 / Af293) (Neosartorya fumigata).